The sequence spans 457 residues: Aromatic amino acid transport protein AroP (457 aa).

Over 1–18 (MMEGQQHGEQLKRGLKNR) the chain is Cytoplasmic. The chain crosses the membrane as a helical span at residues 19-39 (HIQLIALGGAIGTGLFLGSAS). The Periplasmic segment spans residues 40–42 (VIQ). The helical transmembrane segment at 43 to 63 (SAGPGIILGYAIAGFIAFLIM) threads the bilayer. Residues 64 to 98 (RQLGEMVVEEPVAGSFSHFAYKYWGSFAGFASGWN) lie on the Cytoplasmic side of the membrane. Residues 99–119 (YWVLYVLVAMAELTAVGKYIQ) form a helical membrane-spanning segment. At 120-124 (FWYPE) the chain is on the periplasmic side. Residues 125–145 (IPTWVSAAVFFVVINAINLTN) traverse the membrane as a helical segment. At 146–147 (VK) the chain is on the cytoplasmic side. A helical transmembrane segment spans residues 148 to 168 (VFGEMEFWFAIIKVIAVVAMI). The Periplasmic segment spans residues 169–192 (IFGGWLLFSGNGGPQATVSNLWDQ). The chain crosses the membrane as a helical span at residues 193–213 (GGFLPHGFTGLVMMMAIIMFS). Topologically, residues 214-239 (FGGLELVGITAAEADNPEQSIPKATN) are cytoplasmic. Residues 240–260 (QVIYRILIFYIGSLAVLLSLM) form a helical membrane-spanning segment. Residues 261-279 (PWTRVTADTSPFVLIFHEL) are Periplasmic-facing. The helical transmembrane segment at 280–300 (GDTFVANALNIVVLTAALSVY) threads the bilayer. Over 301 to 330 (NSCVYCNSRMLFGLAQQGNAPKALASVDKR) the chain is Cytoplasmic. A helical transmembrane segment spans residues 331–351 (GVPVNTILVSALVTALCVLIN). Over 352-359 (YLAPESAF) the chain is Periplasmic. The helical transmembrane segment at 360–380 (GLLMALVVSALVINWAMISLA) threads the bilayer. The Cytoplasmic portion of the chain corresponds to 381 to 402 (HMKFRRAKQEQGVVTRFPALLY). Residues 403-423 (PLGNWICLLFMAAVLVIMLMT) form a helical membrane-spanning segment. The Periplasmic segment spans residues 424–426 (PGM). The chain crosses the membrane as a helical span at residues 427–447 (AISVYLIPVWLIVLGIGYLFK). The Cytoplasmic portion of the chain corresponds to 448 to 457 (EKTAKAVKAH).

It belongs to the amino acid-polyamine-organocation (APC) superfamily. Amino acid transporter (AAT) (TC 2.A.3.1) family.

It is found in the cell inner membrane. It catalyses the reaction L-phenylalanine(in) + H(+)(in) = L-phenylalanine(out) + H(+)(out). It carries out the reaction L-tryptophan(in) + H(+)(in) = L-tryptophan(out) + H(+)(out). The enzyme catalyses L-tyrosine(in) + H(+)(in) = L-tyrosine(out) + H(+)(out). With respect to regulation, strong, mutual inhibition of uptake by tyrosine, phenylalanine, and tryptophan. Transport is also inhibited by the aromatic analogs p-fluorophenylalanine, beta-2-thienylalanine and 5-methyltryptophan. In terms of biological role, permease that is involved in the active transport across the cytoplasmic membrane of all three aromatic amino acids, phenylalanine, tyrosine and tryptophan. The sequence is that of Aromatic amino acid transport protein AroP from Escherichia coli (strain K12).